Here is a 194-residue protein sequence, read N- to C-terminus: Orotate phosphoribosyltransferase (194 aa).

116 to 124 is a binding site for 5-phospho-alpha-D-ribose 1-diphosphate; the sequence is EDIVTTGLS. Residues threonine 120 and arginine 148 each contribute to the orotate site.

It belongs to the purine/pyrimidine phosphoribosyltransferase family. PyrE subfamily. In terms of assembly, homodimer. It depends on Mg(2+) as a cofactor.

It carries out the reaction orotidine 5'-phosphate + diphosphate = orotate + 5-phospho-alpha-D-ribose 1-diphosphate. It functions in the pathway pyrimidine metabolism; UMP biosynthesis via de novo pathway; UMP from orotate: step 1/2. Functionally, catalyzes the transfer of a ribosyl phosphate group from 5-phosphoribose 1-diphosphate to orotate, leading to the formation of orotidine monophosphate (OMP). The protein is Orotate phosphoribosyltransferase of Caulobacter vibrioides (strain ATCC 19089 / CIP 103742 / CB 15) (Caulobacter crescentus).